A 165-amino-acid polypeptide reads, in one-letter code: Anterior gradient protein 3 (165 aa).

The N-terminal stretch at 1 to 20 (MLHSALALCLLLITVSSNLA) is a signal peptide. The short motif at 162-165 (QSEL) is the Prevents secretion from ER element.

Belongs to the AGR family. Interacts with LYPD3 and DAG1 (alphaDAG1). As to expression, expressed in the ciliated cells of the airway epithelium. Not detected in the mucous cells.

The protein localises to the endoplasmic reticulum. It is found in the cytoplasm. In terms of biological role, required for calcium-mediated regulation of ciliary beat frequency and mucociliary clearance in the airway. Might be involved in the regulation of intracellular calcium in tracheal epithelial cells. The protein is Anterior gradient protein 3 of Mus musculus (Mouse).